The sequence spans 86 residues: Small ribosomal subunit protein bS20 (86 aa).

The span at 1–11 (MANHKSALKRA) shows a compositional bias: basic residues. The tract at residues 1–27 (MANHKSALKRARQNEERRIRNRARKTR) is disordered.

The protein belongs to the bacterial ribosomal protein bS20 family.

Binds directly to 16S ribosomal RNA. The sequence is that of Small ribosomal subunit protein bS20 from Syntrophobacter fumaroxidans (strain DSM 10017 / MPOB).